Reading from the N-terminus, the 630-residue chain is Chaperone protein HtpG (630 aa).

The a; substrate-binding stretch occupies residues 1–343 (MAKHQFQTEA…SKDLPLNVSR (343 aa)). A b region spans residues 344–554 (EILQSNAVMA…KEDPAFMMAQ (211 aa)). The tract at residues 555-630 (IMKQMGQSGD…RLNRVIAKAI (76 aa)) is c.

The protein belongs to the heat shock protein 90 family. Homodimer.

The protein localises to the cytoplasm. Molecular chaperone. Has ATPase activity. The protein is Chaperone protein HtpG of Sulfurimonas denitrificans (strain ATCC 33889 / DSM 1251) (Thiomicrospira denitrificans (strain ATCC 33889 / DSM 1251)).